The following is a 29-amino-acid chain: MDITSIAWGALMVVFTFSLSLVVWGRSGL.

The helical transmembrane segment at 3-23 threads the bilayer; the sequence is ITSIAWGALMVVFTFSLSLVV.

The protein belongs to the PetN family. As to quaternary structure, the 4 large subunits of the cytochrome b6-f complex are cytochrome b6, subunit IV (17 kDa polypeptide, PetD), cytochrome f and the Rieske protein, while the 4 small subunits are PetG, PetL, PetM and PetN. The complex functions as a dimer.

The protein localises to the plastid membrane. Functionally, component of the cytochrome b6-f complex, which mediates electron transfer between photosystem II (PSII) and photosystem I (PSI), cyclic electron flow around PSI, and state transitions. The sequence is that of Cytochrome b6-f complex subunit 8 from Aneura mirabilis (Parasitic liverwort).